Consider the following 891-residue polypeptide: Aconitate hydratase A (891 aa).

Residues C435, C501, and C504 each coordinate [4Fe-4S] cluster.

It belongs to the aconitase/IPM isomerase family. In terms of assembly, monomer. The cofactor is [4Fe-4S] cluster.

It catalyses the reaction citrate = D-threo-isocitrate. Its pathway is carbohydrate metabolism; tricarboxylic acid cycle; isocitrate from oxaloacetate: step 2/2. Functionally, catalyzes the reversible isomerization of citrate to isocitrate via cis-aconitate. The apo form of AcnA functions as a RNA-binding regulatory protein which plays a role as a maintenance or survival enzyme during nutritional or oxidative stress. During oxidative stress inactive AcnA apo-enzyme without iron sulfur clusters binds the acnA mRNA 3' UTRs (untranslated regions), stabilizes acnA mRNA and increases AcnA synthesis, thus mediating a post-transcriptional positive autoregulatory switch. AcnA also enhances the stability of the sodA transcript. The chain is Aconitate hydratase A from Escherichia coli (strain K12).